Consider the following 302-residue polypeptide: Phytoene synthase (302 aa).

The protein belongs to the phytoene/squalene synthase family. It depends on ATP as a cofactor. Mn(2+) serves as cofactor. The cofactor is Mg(2+).

The protein operates within carotenoid biosynthesis; phytoene biosynthesis. Involved in the biosynthesis of carotenoids. Catalyzes the condensation of two molecules of geranylgeranyl diphosphate (GGPP) to give prephytoene diphosphate (PPPP) and the subsequent rearrangement of the cyclopropylcarbinyl intermediate to yield phytoene. The sequence is that of Phytoene synthase (crtB) from Mycobacterium bovis (strain ATCC BAA-935 / AF2122/97).